Reading from the N-terminus, the 182-residue chain is Isopentenyl-diphosphate Delta-isomerase (182 aa).

2 residues coordinate Mn(2+): H25 and H32. Residues 30 to 164 (LLHLAFSSWL…PWAFSPWMVM (135 aa)) enclose the Nudix hydrolase domain. The active site involves C67. Residue H69 coordinates Mn(2+). E87 serves as a coordination point for Mg(2+). Residues E114 and E116 each contribute to the Mn(2+) site. Residue E116 is part of the active site.

It belongs to the IPP isomerase type 1 family. As to quaternary structure, homodimer. Mg(2+) serves as cofactor. The cofactor is Mn(2+).

It localises to the cytoplasm. The catalysed reaction is isopentenyl diphosphate = dimethylallyl diphosphate. Its pathway is isoprenoid biosynthesis; dimethylallyl diphosphate biosynthesis; dimethylallyl diphosphate from isopentenyl diphosphate: step 1/1. Catalyzes the 1,3-allylic rearrangement of the homoallylic substrate isopentenyl (IPP) to its highly electrophilic allylic isomer, dimethylallyl diphosphate (DMAPP). The polypeptide is Isopentenyl-diphosphate Delta-isomerase (Escherichia coli (strain SMS-3-5 / SECEC)).